Here is a 159-residue protein sequence, read N- to C-terminus: Phosphopantetheine adenylyltransferase (159 aa).

Residue Thr-10 coordinates substrate. ATP contacts are provided by residues 10-11 (TF) and His-18. Positions 42, 74, and 88 each coordinate substrate. ATP-binding positions include 89 to 91 (GLR), Glu-99, and 124 to 130 (NSFISST).

This sequence belongs to the bacterial CoaD family. Homohexamer. Mg(2+) is required as a cofactor.

The protein localises to the cytoplasm. The catalysed reaction is (R)-4'-phosphopantetheine + ATP + H(+) = 3'-dephospho-CoA + diphosphate. The protein operates within cofactor biosynthesis; coenzyme A biosynthesis; CoA from (R)-pantothenate: step 4/5. Its function is as follows. Reversibly transfers an adenylyl group from ATP to 4'-phosphopantetheine, yielding dephospho-CoA (dPCoA) and pyrophosphate. The polypeptide is Phosphopantetheine adenylyltransferase (Shewanella halifaxensis (strain HAW-EB4)).